Reading from the N-terminus, the 632-residue chain is PWWP domain-containing protein 5 (632 aa).

Residues 97 to 158 (DSDLVWAKLR…ASQIKPFHQN (62 aa)) enclose the PWWP domain. Positions 310-452 (RKTDYKDNAE…AERKISSPDE (143 aa)) are disordered. Composition is skewed to basic and acidic residues over residues 313 to 326 (DYKD…EKTL), 339 to 364 (STEK…GKSE), 371 to 383 (QQKE…HSNE), and 425 to 449 (KSTE…KISS). The short motif at 352–359 (KRKVESSE) is the Nuclear localization signal element.

It belongs to the PDP family. In terms of assembly, component of the PRC2 (polycomb repressive complex 2) complex which regulates histone methylation on histone H3K27.

The protein resides in the nucleus. Its function is as follows. May influence gene expression by regulating the function of the PRC2 complex and modulating H3K27me3 level. The protein is PWWP domain-containing protein 5 of Arabidopsis thaliana (Mouse-ear cress).